A 519-amino-acid chain; its full sequence is ATP synthase subunit alpha (519 aa).

Residue 174–181 (GDRQTGKT) participates in ATP binding.

The protein belongs to the ATPase alpha/beta chains family. In terms of assembly, F-type ATPases have 2 components, CF(1) - the catalytic core - and CF(0) - the membrane proton channel. CF(1) has five subunits: alpha(3), beta(3), gamma(1), delta(1), epsilon(1). CF(0) has three main subunits: a(1), b(2) and c(9-12). The alpha and beta chains form an alternating ring which encloses part of the gamma chain. CF(1) is attached to CF(0) by a central stalk formed by the gamma and epsilon chains, while a peripheral stalk is formed by the delta and b chains.

The protein localises to the cell inner membrane. The catalysed reaction is ATP + H2O + 4 H(+)(in) = ADP + phosphate + 5 H(+)(out). Produces ATP from ADP in the presence of a proton gradient across the membrane. The alpha chain is a regulatory subunit. This chain is ATP synthase subunit alpha, found in Acidovorax ebreus (strain TPSY) (Diaphorobacter sp. (strain TPSY)).